A 688-amino-acid chain; its full sequence is MTTQNFLVEIGTEELPPKALKTLATSFADNVEAELNQAGLSFDKIEWFAAPRRLAVKVLNLATQQPSKEIEKRGPAVSAAFDAEGKPTKAAEGWARGCGITVEQAERIATDKGEWLIHRAKIEGQPTKNLLNDIVANALAKLPIPKPMRWADKTVQFIRPVHTVTMLLGDELIEGEILGVASARTIRGHRFLGEKEFYIQHADQYPQLLREKGSVVADFNERKAEILAKSQAKATALGGVADIEESLLEEVTSLVEYPNVLAAKFEEHFLAVPAEALVYTMKGDQKYFPIYDKDGKLLPHFIFVSNINPEDPTAIIEGNEKVVRPRLTDAEFFFKTDLKQKLVDRLPRLETVLFQQQLGTLKDKTDRIEQLAGEIAKQIGADEAKAKRAGLLSKCDLMTNMVFEFTDTQGVMGMHYARHDGEDEEVAVALNEQYMPRFAGDELPKSLVASAVALADKFDTLTGIFGIGQAPKGSADPFALRRAALGALRIIVEKNLPLDLEDLVKKSAALFGDKLTNQNVVADVVDFMLGRFRAWYQDEGIAVDVIQAVLARRPTRPADFDARVRAVSHFRTLDSAEALAAANKRVSNILAKAGAAIGEINLTACVEPAEKALAEAVLALRTEVQPLIAQGDYTTVLDKLANLRAPVDSFFDNVMVNAEDPALRQNRLAILNTLQGLFLQVADISVLQ.

It belongs to the class-II aminoacyl-tRNA synthetase family. Tetramer of two alpha and two beta subunits.

It localises to the cytoplasm. The enzyme catalyses tRNA(Gly) + glycine + ATP = glycyl-tRNA(Gly) + AMP + diphosphate. The protein is Glycine--tRNA ligase beta subunit (glyS) of Haemophilus influenzae (strain ATCC 51907 / DSM 11121 / KW20 / Rd).